The chain runs to 210 residues: Peptidyl-tRNA hydrolase (210 aa).

A tRNA-binding site is contributed by Tyr-30. Residue His-35 is the Proton acceptor of the active site. Residues Tyr-81, Asn-83, and Asn-129 each contribute to the tRNA site.

It belongs to the PTH family. Monomer.

The protein resides in the cytoplasm. The enzyme catalyses an N-acyl-L-alpha-aminoacyl-tRNA + H2O = an N-acyl-L-amino acid + a tRNA + H(+). In terms of biological role, hydrolyzes ribosome-free peptidyl-tRNAs (with 1 or more amino acids incorporated), which drop off the ribosome during protein synthesis, or as a result of ribosome stalling. Functionally, catalyzes the release of premature peptidyl moieties from peptidyl-tRNA molecules trapped in stalled 50S ribosomal subunits, and thus maintains levels of free tRNAs and 50S ribosomes. This is Peptidyl-tRNA hydrolase from Bordetella petrii (strain ATCC BAA-461 / DSM 12804 / CCUG 43448).